The sequence spans 110 residues: Large ribosomal subunit protein uL22 (110 aa).

This sequence belongs to the universal ribosomal protein uL22 family. In terms of assembly, part of the 50S ribosomal subunit.

Its function is as follows. This protein binds specifically to 23S rRNA; its binding is stimulated by other ribosomal proteins, e.g. L4, L17, and L20. It is important during the early stages of 50S assembly. It makes multiple contacts with different domains of the 23S rRNA in the assembled 50S subunit and ribosome. The globular domain of the protein is located near the polypeptide exit tunnel on the outside of the subunit, while an extended beta-hairpin is found that lines the wall of the exit tunnel in the center of the 70S ribosome. The sequence is that of Large ribosomal subunit protein uL22 from Salmonella arizonae (strain ATCC BAA-731 / CDC346-86 / RSK2980).